The sequence spans 827 residues: Probable inorganic carbon transporter subunit DabA2 (827 aa).

Zn(2+) is bound by residues C351, D353, H524, and C539.

The protein belongs to the inorganic carbon transporter (TC 9.A.2) DabA family. As to quaternary structure, forms a complex with DabB2, possibly a heterodimer. Requires Zn(2+) as cofactor.

It localises to the cell inner membrane. With respect to regulation, uptake of inorganic carbon by cells in the presence of thiosulphate is fully inhibited by the uncouplers carbonyl cyanide m-chlorophenyl hydrazone (CCCP), carbonyl cyanide p-trifluoromethoxyphenyl hydrazone (FCCP), S13 or SF6847. Not inhibited by the ATPase inhibitor N,N-dicyclohexylcarbodiimide (DCCD). Inorganic carbon uptake is inhibited by the ionophore CCCP, suggesting uptake is coupled to a cation gradient. Its function is as follows. Part of an energy-coupled inorganic carbon pump; its substrate may be carbon dioxide. Expression of both dabA2 and dabB2 (DAB2) restores growth in ambient air to E.coli deleted of its carbonic anhydrase genes (called CAfree, deletion of 'can' and 'cynT'); neither dabA2 or dabB2 alone is sufficient. Rescue is pH-independent, suggesting it transports CO(2) and not carbonate ions. Together the genes allow greater than normal uptake of inorganic carbon by E.coli. Uptake of carbon dioxide rather than bicarbonate has been suggested based on kinetic calculations. This chain is Probable inorganic carbon transporter subunit DabA2, found in Halothiobacillus neapolitanus (strain ATCC 23641 / c2) (Thiobacillus neapolitanus).